Reading from the N-terminus, the 411-residue chain is Dual-specificity RNA methyltransferase RlmN (411 aa).

Residue glutamate 124 is the Proton acceptor of the active site. The region spanning glutamate 130 to leucine 379 is the Radical SAM core domain. The cysteines at positions 137 and 382 are disulfide-linked. [4Fe-4S] cluster contacts are provided by cysteine 144, cysteine 148, and cysteine 151. S-adenosyl-L-methionine contacts are provided by residues glycine 208–glutamate 209, serine 240, serine 262–histidine 264, and asparagine 339. Residue cysteine 382 is the S-methylcysteine intermediate of the active site.

It belongs to the radical SAM superfamily. RlmN family. [4Fe-4S] cluster serves as cofactor.

It is found in the cytoplasm. It catalyses the reaction adenosine(2503) in 23S rRNA + 2 reduced [2Fe-2S]-[ferredoxin] + 2 S-adenosyl-L-methionine = 2-methyladenosine(2503) in 23S rRNA + 5'-deoxyadenosine + L-methionine + 2 oxidized [2Fe-2S]-[ferredoxin] + S-adenosyl-L-homocysteine. The enzyme catalyses adenosine(37) in tRNA + 2 reduced [2Fe-2S]-[ferredoxin] + 2 S-adenosyl-L-methionine = 2-methyladenosine(37) in tRNA + 5'-deoxyadenosine + L-methionine + 2 oxidized [2Fe-2S]-[ferredoxin] + S-adenosyl-L-homocysteine. Functionally, specifically methylates position 2 of adenine 2503 in 23S rRNA and position 2 of adenine 37 in tRNAs. m2A2503 modification seems to play a crucial role in the proofreading step occurring at the peptidyl transferase center and thus would serve to optimize ribosomal fidelity. The polypeptide is Dual-specificity RNA methyltransferase RlmN (Rhizobium meliloti (strain 1021) (Ensifer meliloti)).